A 380-amino-acid chain; its full sequence is Kappa-type opioid receptor (380 aa).

The Extracellular portion of the chain corresponds to 1-57 (MESPIQIFRGDPGPTCSPSACLLPNSSSWFPNWAESDSNGSVGSEDQQLESAHISPA). 2 N-linked (GlcNAc...) asparagine glycosylation sites follow: Asn-25 and Asn-39. A helical transmembrane segment spans residues 58–85 (IPVIITAVYSVVFVVGLVGNSLVMFVII). Over 86–95 (RYTKMKTATN) the chain is Cytoplasmic. A helical membrane pass occupies residues 96 to 119 (IYIFNLALADALVTTTMPFQSAVY). Residues 120 to 132 (LMNSWPFGDVLCK) are Extracellular-facing. A disulfide bond links Cys-131 and Cys-210. The chain crosses the membrane as a helical span at residues 133–154 (IVISIDYYNMFTSIFTLTMMSV). Topologically, residues 155 to 173 (DRYIAVCHPVKALDFRTPL) are cytoplasmic. A helical transmembrane segment spans residues 174–196 (KAKIINICIWLLASSVGISAIVL). At 197–222 (GGTKVREDVDVIECSLQFPDDEYSWW) the chain is on the extracellular side. Residues 223 to 247 (DLFMKICVFVFAFVIPVLIIIVCYT) traverse the membrane as a helical segment. Residues 248–274 (LMILRLKSVRLLSGSREKDRNLRRITK) lie on the Cytoplasmic side of the membrane. A helical membrane pass occupies residues 275-296 (LVLVVVAVFIICWTPIHIFILV). The Extracellular segment spans residues 297-311 (EALGSTSHSTAALSS). The chain crosses the membrane as a helical span at residues 312–333 (YYFCIALGYTNSSLNPVLYAFL). At 334 to 380 (DENFKRCFRDFCFPIKMRMERQSTNRVRNTVQDPASMRDVGGMNKPV) the chain is on the cytoplasmic side. Cys-345 is lipidated: S-palmitoyl cysteine.

The protein belongs to the G-protein coupled receptor 1 family. In terms of assembly, interacts with NHERF1. Interacts with GABARAPL1. In terms of tissue distribution, detected in brain (at protein level). Brain (neocortex, hippocampus, amygdala, medial habenula, hypothalamus, locus ceruleus, and parabrachial nucleus).

It is found in the cell membrane. G-protein coupled opioid receptor that functions as a receptor for endogenous alpha-neoendorphins and dynorphins, but has low affinity for beta-endorphins. Also functions as a receptor for various synthetic opioids and for the psychoactive diterpene salvinorin A. Ligand binding causes a conformation change that triggers signaling via guanine nucleotide-binding proteins (G proteins) and modulates the activity of down-stream effectors, such as adenylate cyclase. Signaling leads to the inhibition of adenylate cyclase activity. Inhibits neurotransmitter release by reducing calcium ion currents and increasing potassium ion conductance. Plays a role in the perception of pain. Plays a role in mediating reduced physical activity upon treatment with synthetic opioids. Plays a role in the regulation of salivation in response to synthetic opioids. May play a role in arousal and regulation of autonomic and neuroendocrine functions. This is Kappa-type opioid receptor (Oprk1) from Mus musculus (Mouse).